Consider the following 637-residue polypeptide: Threonine--tRNA ligase (637 aa).

Residues 1–61 form the TGS domain; that stretch reads MPVITLPDGS…DKDAELAIVT (61 aa). The tract at residues 242-533 is catalytic; it reads DHRKIGKKLG…LIEHYEGAFP (292 aa). Zn(2+) contacts are provided by Cys333, His384, and His510.

The protein belongs to the class-II aminoacyl-tRNA synthetase family. Homodimer. The cofactor is Zn(2+).

Its subcellular location is the cytoplasm. It carries out the reaction tRNA(Thr) + L-threonine + ATP = L-threonyl-tRNA(Thr) + AMP + diphosphate + H(+). In terms of biological role, catalyzes the attachment of threonine to tRNA(Thr) in a two-step reaction: L-threonine is first activated by ATP to form Thr-AMP and then transferred to the acceptor end of tRNA(Thr). Also edits incorrectly charged L-seryl-tRNA(Thr). The chain is Threonine--tRNA ligase from Hahella chejuensis (strain KCTC 2396).